Here is a 262-residue protein sequence, read N- to C-terminus: Hemin import ATP-binding protein HmuV (262 aa).

In terms of domain architecture, ABC transporter spans 3–244 (LQARNLTLAR…DHMRRVYGIE (242 aa)). 35 to 42 (GANGAGKS) serves as a coordination point for ATP.

The protein belongs to the ABC transporter superfamily. Heme (hemin) importer (TC 3.A.1.14.5) family. The complex is composed of two ATP-binding proteins (HmuV), two transmembrane proteins (HmuU) and a solute-binding protein (HmuT).

The protein localises to the cell inner membrane. Its function is as follows. Part of the ABC transporter complex HmuTUV involved in hemin import. Responsible for energy coupling to the transport system. The protein is Hemin import ATP-binding protein HmuV of Bordetella pertussis (strain Tohama I / ATCC BAA-589 / NCTC 13251).